The sequence spans 180 residues: Ribulose bisphosphate carboxylase small subunit, chloroplastic 5 (180 aa).

Residues 1-56 (MASSVMSSAAVATRGNGAQASMVAPFTGLKSTASFPVSRKQNLDITSIASNGGRVR) constitute a chloroplast transit peptide.

It belongs to the RuBisCO small chain family. Heterohexadecamer of 8 large and 8 small subunits.

It is found in the plastid. It localises to the chloroplast. In terms of biological role, ruBisCO catalyzes two reactions: the carboxylation of D-ribulose 1,5-bisphosphate, the primary event in carbon dioxide fixation, as well as the oxidative fragmentation of the pentose substrate. Both reactions occur simultaneously and in competition at the same active site. Although the small subunit is not catalytic it is essential for maximal activity. The sequence is that of Ribulose bisphosphate carboxylase small subunit, chloroplastic 5 from Solanum tuberosum (Potato).